We begin with the raw amino-acid sequence, 283 residues long: Nucleotide-binding protein Hore_15880 (283 aa).

ATP is bound at residue 8 to 15; the sequence is GMSGAGKS. 57-60 contributes to the GTP binding site; the sequence is DIRG.

The protein belongs to the RapZ-like family.

Functionally, displays ATPase and GTPase activities. The chain is Nucleotide-binding protein Hore_15880 from Halothermothrix orenii (strain H 168 / OCM 544 / DSM 9562).